The sequence spans 201 residues: MSNVLVIQSSILGSYSQSAKLLDNFAVEWKQKHPTDNIVIRDLAAEPLPVLDGEIIAALGGNGELNERQKAAAELSLNLIEEVKTADYVAIAVPMYNFGIPVQLKTWIDLICRAGVTFSYTENGPQGLLVGKKVLVVTTTGGAHRNTATDLALAHIQAVLSLVGLNDISVAYAETLNMGPEAQERGLAEATKAIQAFIAAH.

FMN contacts are provided by residues Ser-10, Ser-16–Ser-18, Met-95–Phe-98, and Thr-139–Gly-142.

It belongs to the azoreductase type 1 family. In terms of assembly, homodimer. Requires FMN as cofactor.

It carries out the reaction 2 a quinone + NADH + H(+) = 2 a 1,4-benzosemiquinone + NAD(+). The enzyme catalyses N,N-dimethyl-1,4-phenylenediamine + anthranilate + 2 NAD(+) = 2-(4-dimethylaminophenyl)diazenylbenzoate + 2 NADH + 2 H(+). In terms of biological role, quinone reductase that provides resistance to thiol-specific stress caused by electrophilic quinones. Its function is as follows. Also exhibits azoreductase activity. Catalyzes the reductive cleavage of the azo bond in aromatic azo compounds to the corresponding amines. The chain is FMN-dependent NADH:quinone oxidoreductase from Tolumonas auensis (strain DSM 9187 / NBRC 110442 / TA 4).